Here is a 219-residue protein sequence, read N- to C-terminus: Chloramphenicol acetyltransferase (219 aa).

The active-site Proton acceptor is the histidine 190.

The protein belongs to the chloramphenicol acetyltransferase family. As to quaternary structure, homotrimer.

It catalyses the reaction chloramphenicol + acetyl-CoA = chloramphenicol 3-acetate + CoA. Its function is as follows. This enzyme is an effector of chloramphenicol resistance in bacteria. This Clostridium perfringens protein is Chloramphenicol acetyltransferase (catQ).